The following is a 256-amino-acid chain: Pimeloyl-[acyl-carrier protein] methyl ester esterase (256 aa).

The 228-residue stretch at 15–242 (HLVLLHGWGL…AAHAPFISHP (228 aa)) folds into the AB hydrolase-1 domain. Residues tryptophan 22, 82 to 83 (SL), and 143 to 147 (FLALQ) contribute to the substrate site. Catalysis depends on serine 82, which acts as the Nucleophile. Residues aspartate 207 and histidine 235 contribute to the active site. Histidine 235 serves as a coordination point for substrate.

This sequence belongs to the AB hydrolase superfamily. Carboxylesterase BioH family. Monomer.

It is found in the cytoplasm. The catalysed reaction is 6-carboxyhexanoyl-[ACP] methyl ester + H2O = 6-carboxyhexanoyl-[ACP] + methanol + H(+). Its pathway is cofactor biosynthesis; biotin biosynthesis. Functionally, the physiological role of BioH is to remove the methyl group introduced by BioC when the pimeloyl moiety is complete. It allows to synthesize pimeloyl-ACP via the fatty acid synthetic pathway through the hydrolysis of the ester bonds of pimeloyl-ACP esters. The chain is Pimeloyl-[acyl-carrier protein] methyl ester esterase from Shigella dysenteriae serotype 1 (strain Sd197).